The following is a 347-amino-acid chain: Protein RecA (347 aa).

67–74 (GPESSGKT) contacts ATP. Residues 327 to 347 (ALGLSSPTPKENGKEKGKAKP) form a disordered region. The span at 337–347 (ENGKEKGKAKP) shows a compositional bias: basic and acidic residues.

This sequence belongs to the RecA family.

It localises to the cytoplasm. Its function is as follows. Can catalyze the hydrolysis of ATP in the presence of single-stranded DNA, the ATP-dependent uptake of single-stranded DNA by duplex DNA, and the ATP-dependent hybridization of homologous single-stranded DNAs. It interacts with LexA causing its activation and leading to its autocatalytic cleavage. In Desulforapulum autotrophicum (strain ATCC 43914 / DSM 3382 / VKM B-1955 / HRM2) (Desulfobacterium autotrophicum), this protein is Protein RecA.